Here is a 387-residue protein sequence, read N- to C-terminus: Protein SGT1 homolog (387 aa).

TPR repeat units follow at residues 1-34, 36-67, and 68-101; these read MEQL…SNNA, AFFK…DSNN, and SKYY…DSEN. Disordered regions lie at residues 110 to 193 and 299 to 323; these read KSKA…PSSG and SPAV…EEKL. Over residues 118-127 the composition is skewed to low complexity; it reads NPTTTTTTTP. A compositionally biased stretch (pro residues) spans 128 to 138; sequence TPTPTPTPAPQ. The segment covering 139 to 185 has biased composition (low complexity); it reads PVTTTTNPTPIPTTSNTTTTTNNNNNNNNNNNNNNNNNNTTTDSTTT. The CS domain occupies 193–282; it reads GNKVRHEWYQ…SRAIKWDTLE (90 aa). The SGS domain maps to 301-387; that stretch reads AVPSPYASKK…KGLEFKQYEK (87 aa). A compositionally biased stretch (basic and acidic residues) spans 308 to 323; the sequence is SKKDWDKLPNEPEEKL.

It belongs to the SGT1 family.

In terms of biological role, may play a role in ubiquitination and subsequent proteasomal degradation of target proteins. The polypeptide is Protein SGT1 homolog (sugt1) (Dictyostelium discoideum (Social amoeba)).